A 428-amino-acid chain; its full sequence is MQESLTLQPIARVDGTINLPGSKSVSNRALLLAALAKGTTTLTNLLDSDDVRHMLNALNALGVHYSLSDDRTRCEIQGQGGPFNTLVELELFLGNAGTAMRPLAAALCLGTNNVVLTGEPRMKERPIGHLVDALRQGGADVTYLEQENYPPLHLKGGFTGGNVTVDGSVSSQFLTALLMAAPLAPGNTAIDIKGELVSKPYIDITLHLMKTFGVEVENQNYQRFVIQGGQQYQSPGHYLVEGDASSASYFLAAAAIKGGTVKVTGIGRNSVQGDIRFADVLEKMGAHITWGDDFISCTRGELNAIDMDMNHIPDAAMTIATTALFAKGTTTLRNIYNWRVKETDRLAAMATELRKVGATVEEGHDFITVTPPAQLQFADIGTYNDHRMAMCFSLVALSDTPVTILDPKCTAKTFPNYFAQLARISHSA.

The 3-phosphoshikimate site is built by K23, S24, and R28. K23 provides a ligand contact to phosphoenolpyruvate. Positions 97 and 125 each coordinate phosphoenolpyruvate. 7 residues coordinate 3-phosphoshikimate: S170, S171, Q172, S198, D314, N337, and K341. Q172 contributes to the phosphoenolpyruvate binding site. D314 (proton acceptor) is an active-site residue. 3 residues coordinate phosphoenolpyruvate: R345, R387, and K412.

The protein belongs to the EPSP synthase family. In terms of assembly, monomer.

Its subcellular location is the cytoplasm. The catalysed reaction is 3-phosphoshikimate + phosphoenolpyruvate = 5-O-(1-carboxyvinyl)-3-phosphoshikimate + phosphate. The protein operates within metabolic intermediate biosynthesis; chorismate biosynthesis; chorismate from D-erythrose 4-phosphate and phosphoenolpyruvate: step 6/7. Functionally, catalyzes the transfer of the enolpyruvyl moiety of phosphoenolpyruvate (PEP) to the 5-hydroxyl of shikimate-3-phosphate (S3P) to produce enolpyruvyl shikimate-3-phosphate and inorganic phosphate. This chain is 3-phosphoshikimate 1-carboxyvinyltransferase, found in Cronobacter sakazakii (strain ATCC BAA-894) (Enterobacter sakazakii).